Here is a 170-residue protein sequence, read N- to C-terminus: Small ribosomal subunit protein uS13m (170 aa).

The disordered stretch occupies residues 130-170 (LKKKPTNRKERRIFNKIKKLQDKHNKQQQKNKKSKKWKTKK). 2 stretches are compositionally biased toward basic residues: residues 132–147 (KKPTNRKERRIFNKIK) and 155–170 (KQQQKNKKSKKWKTKK).

This sequence belongs to the universal ribosomal protein uS13 family. In terms of assembly, part of the small ribosomal subunit.

The protein resides in the mitochondrion. Its function is as follows. Located at the top of the head of the small subunit, it contacts several helices of the small subunit rRNA. The sequence is that of Small ribosomal subunit protein uS13m (mrps13) from Dictyostelium citrinum (Slime mold).